The following is a 990-amino-acid chain: Insulin-degrading enzyme (990 aa).

Position 81 (histidine 81) interacts with Zn(2+). Catalysis depends on glutamate 84, which acts as the Proton acceptor. Zn(2+) is bound by residues histidine 85 and glutamate 162.

Belongs to the peptidase M16 family. The cofactor is Zn(2+).

It catalyses the reaction Degradation of insulin, glucagon and other polypeptides. No action on proteins.. In terms of biological role, can cleave insulin and TGF-alpha. The protein is Insulin-degrading enzyme (Ide) of Drosophila melanogaster (Fruit fly).